A 648-amino-acid polypeptide reads, in one-letter code: Protein associated with UVRAG as autophagy enhancer (648 aa).

Polar residues-rich tracts occupy residues 131 to 146 and 157 to 173; these read QESL…TSPS and PHLT…SSSR. The tract at residues 131–173 is disordered; sequence QESLLKNPKTVATSPSPKEGSARSESPHLTASTDDGDARSSSR. Ser144 carries the phosphoserine modification. The interaction with UVRAG stretch occupies residues 183–222; that stretch reads ETFMLPADVEKENLHFYAADIIISVIENMKCNLPNQQQPE. An N6-acetyllysine mark is found at Lys469, Lys509, Lys519, Lys559, and Lys619.

In terms of assembly, interacts with UVRAG; the interaction is direct and promotes association with the PI3K/PI3KC3 and HOPS complexes. Interacts with STX17. Post-translationally, phosphorylated by MTOR at Ser-144 under nutrient-rich conditions. Phosphorylation prevents acetylation by KAT5/TIP60 and impairs RUBCNL/PACER function and autophagosome maturation. Under autophagy induction, Phosphorylation by MTOR is repressed, enabling acetylation by KAT5/TIP60. In terms of processing, acetylated by KAT5/TIP60 under autophagy induction, promoting autophagosome maturation and lipid metabolism. Acetylation is prevented by phosphorylation by MTOR. Lys-469 and Lys-559 constitute the key sites for tuning function in autophagy.

It localises to the cytoplasmic vesicle. Its subcellular location is the autophagosome membrane. Functionally, regulator of autophagy that promotes autophagosome maturation by facilitating the biogenesis of phosphatidylinositol 3-phosphate (PtdIns(3)P) in late steps of autophagy. Acts by antagonizing RUBCN, thereby stimulating phosphatidylinositol 3-kinase activity of the PI3K/PI3KC3 complex. Following anchorage to the autophagosomal SNARE STX17, promotes the recruitment of PI3K/PI3KC3 and HOPS complexes to the autophagosome to regulate the fusion specificity of autophagosomes with late endosomes/lysosomes. Binds phosphoinositides phosphatidylinositol 3-phosphate (PtdIns(3)P), 4-phosphate (PtdIns(4)P) and 5-phosphate (PtdIns(5)P). In addition to its role in autophagy, acts as a regulator of lipid and glycogen homeostasis. May act as a tumor suppressor. This Mus musculus (Mouse) protein is Protein associated with UVRAG as autophagy enhancer.